The chain runs to 291 residues: N-acetylmannosamine kinase (291 aa).

ATP is bound by residues Ala5–Lys12 and Gly132–Ser139. Zn(2+) is bound by residues His156, Cys166, Cys168, and Cys173.

It belongs to the ROK (NagC/XylR) family. NanK subfamily. In terms of assembly, homodimer.

The enzyme catalyses an N-acyl-D-mannosamine + ATP = an N-acyl-D-mannosamine 6-phosphate + ADP + H(+). It participates in amino-sugar metabolism; N-acetylneuraminate degradation; D-fructose 6-phosphate from N-acetylneuraminate: step 2/5. Its function is as follows. Catalyzes the phosphorylation of N-acetylmannosamine (ManNAc) to ManNAc-6-P. This chain is N-acetylmannosamine kinase, found in Escherichia coli O157:H7.